A 78-amino-acid chain; its full sequence is Large ribosomal subunit protein bL28 (78 aa).

The disordered stretch occupies residues 1 to 31 (MAAHCQVTGAEPGFGHSISHSHRRNKRRFDP).

This sequence belongs to the bacterial ribosomal protein bL28 family.

This chain is Large ribosomal subunit protein bL28, found in Paenarthrobacter aurescens (strain TC1).